Reading from the N-terminus, the 425-residue chain is Enolase (425 aa).

Gln162 is a (2R)-2-phosphoglycerate binding site. Residue Glu204 is the Proton donor of the active site. Residues Asp241, Glu282, and Asp309 each coordinate Mg(2+). Positions 334, 363, 364, and 385 each coordinate (2R)-2-phosphoglycerate. The Proton acceptor role is filled by Lys334.

The protein belongs to the enolase family. Mg(2+) is required as a cofactor.

It is found in the cytoplasm. It localises to the secreted. The protein localises to the cell surface. The catalysed reaction is (2R)-2-phosphoglycerate = phosphoenolpyruvate + H2O. It functions in the pathway carbohydrate degradation; glycolysis; pyruvate from D-glyceraldehyde 3-phosphate: step 4/5. Catalyzes the reversible conversion of 2-phosphoglycerate (2-PG) into phosphoenolpyruvate (PEP). It is essential for the degradation of carbohydrates via glycolysis. The chain is Enolase from Corynebacterium efficiens (strain DSM 44549 / YS-314 / AJ 12310 / JCM 11189 / NBRC 100395).